Here is a 348-residue protein sequence, read N- to C-terminus: Rhodopsin (348 aa).

Position 1 is an N-acetylmethionine (methionine 1). At 1–36 the chain is on the extracellular side; the sequence is MNGTEGPNFYVPFSNKTGVVRSPFEYPQYYLAEPWQ. 2 N-linked (GlcNAc...) asparagine glycosylation sites follow: asparagine 2 and asparagine 15. Residues 37 to 61 form a helical membrane-spanning segment; the sequence is FSMLAAYMFLLIVLGFPINFLTLYV. Residues 62 to 73 are Cytoplasmic-facing; sequence TVQHKNVRTPLN. Residues 74–96 form a helical membrane-spanning segment; the sequence is YILLNLAVANHFMVFGGFTTTLY. Topologically, residues 97–110 are extracellular; that stretch reads TSLHGYFVFGSTGC. The cysteines at positions 110 and 187 are disulfide-linked. Residues 111-133 traverse the membrane as a helical segment; sequence NLEGFFATLGGEIALWSLVVLAI. A 'Ionic lock' involved in activated form stabilization motif is present at residues 134 to 136; it reads ERY. The Cytoplasmic portion of the chain corresponds to 134–152; the sequence is ERYVVVCKPMSNFRFGENH. A helical transmembrane segment spans residues 153–173; it reads AIMGVAFTWVMALACAAPPLV. At 174 to 202 the chain is on the extracellular side; it reads GWSRYIPEGMQCSCGIDYYTLKPEVNNES. Zn(2+) is bound at residue glutamate 201. The chain crosses the membrane as a helical span at residues 203-224; sequence FVIYMFVVHFTIPMTIIFFCYG. Residues 225-252 lie on the Cytoplasmic side of the membrane; it reads QLVFTVKEAAAQQQESATTQKAEKEVTR. The chain crosses the membrane as a helical span at residues 253-274; sequence MVIIMVIAFLICWVPYASVAFY. Topologically, residues 275–286 are extracellular; it reads IFTHQGSDFGPI. Position 279 (glutamine 279) interacts with Zn(2+). The chain crosses the membrane as a helical span at residues 287-308; that stretch reads LMTLPAFFAKSSAIYNPVIYIM. N6-(retinylidene)lysine is present on lysine 296. The Cytoplasmic portion of the chain corresponds to 309–348; sequence MNKQFRNCMLTTICCGKNPFGEEEGSTTASKTETSQVAPA. S-palmitoyl cysteine attachment occurs at residues cysteine 322 and cysteine 323. The tract at residues 330 to 348 is interaction with SAG; sequence EEEGSTTASKTETSQVAPA. Position 334 is a phosphoserine (serine 334). A phosphothreonine mark is found at threonine 335 and threonine 336. Phosphoserine is present on serine 338. Threonine 340 and threonine 342 each carry phosphothreonine. The residue at position 343 (serine 343) is a Phosphoserine.

Belongs to the G-protein coupled receptor 1 family. Opsin subfamily. Homodimer. May form a complex composed of RHO, GRK1 and RCVRN in a Ca(2+)-dependent manner; RCVRN prevents the interaction between GRK1 and RHO. Interacts with GRK1. Interacts (phosphorylated form) with SAG. Interacts with GNAT1. Interacts with GNAT3. SAG and G-proteins compete for a common binding site. Interacts with PRCD; the interaction promotes PRCD stability. Forms a complex with ASAP1 and ARF4. Forms a complex with ASAP1, RAB11A, Rabin8/RAB3IP, ARF4 and RAB11FIP3; the complex regulates Golgi-to-cilia rhodopsin/RHO transport in photoreceptors. Phosphorylated on some or all of the serine and threonine residues present in the C-terminal region. Post-translationally, contains one covalently linked retinal chromophore. Upon light absorption, the covalently bound 11-cis-retinal is converted to all-trans-retinal. After hydrolysis of the Schiff base and release of the covalently bound all-trans-retinal, active rhodopsin is regenerated by binding of a fresh molecule of 11-cis-retinal.

It localises to the membrane. The protein localises to the cell projection. The protein resides in the cilium. It is found in the photoreceptor outer segment. Its function is as follows. Photoreceptor required for image-forming vision at low light intensity. Required for photoreceptor cell viability after birth. Light-induced isomerization of 11-cis to all-trans retinal triggers a conformational change that activates signaling via G-proteins. Subsequent receptor phosphorylation mediates displacement of the bound G-protein alpha subunit by the arrestin SAG and terminates signaling. In Loxodonta africana (African elephant), this protein is Rhodopsin (RHO).